Consider the following 462-residue polypeptide: MSASLLEKQSTGGAIARVGFGYQDAFVLRSLPLWLSQSAFSHIVSEALSDIEVCYFSSEKSLHVMYEAKNHSLTATEFWDEIRRFKSLFDTHPKNFIWFNLVCPSYNTAISPLISKIDRLRGVGSSYDDDSSVSVNGRSEYLDWCVGKKIDFSLAEFALDYVGFITFNSENSESIFLSEIQDTINIELLRSQVKQLKDQFKNLISRSSFGPIYRKDFENFICHALEEDRSQWLLDPIKINLSASSSQYQDLNLDISDFNGPDRAQKTSSDWNSLIKKAVSIGDFIHNSGDRRTLLIDGKQRMSTACMLGYVFSATRNFLLEIEHNGLIYRTDDHKQKEGQFFTKIEAVEPQGETEAIVAIGFPTAIGKDIDSTINEVKSLPRLNLESSHAIDNMETLNLAVREAKSALVSFKSENKLSKLHLFIKAPSVFAMVLGHRLNGICDIQLYDWVDGQYIPTAELNL.

Residues Met-1 to Glu-226 are N-terminal endonuclease domain. Active-site residues include Asp-50, Glu-67, and Lys-69. Residue Asp-50 participates in Mg(2+) binding. Residues Asp-235–Leu-462 form a C-terminal SAVED domain region. 2',3',3'-c-tri-AMP-binding positions include Lys-299–Arg-301, Trp-449, and Tyr-454.

It belongs to the Cap4 nuclease family. As to quaternary structure, a monomer in the absence of ligand, in its presence it forms oligomers. It depends on a divalent metal cation as a cofactor.

With respect to regulation, DNase activity is activated upon ligand binding. Inhibited by EDTA. In terms of biological role, effector DNase of a CBASS antivirus system. CBASS (cyclic oligonucleotide-based antiphage signaling system) provides immunity against bacteriophage. The CD-NTase protein synthesizes cyclic nucleotides in response to infection; these serve as specific second messenger signals. The signals activate a diverse range of effectors, leading to bacterial cell death and thus abortive phage infection. A type II-C(AAAA) CBASS system. Its function is as follows. Binds cyclic nucleotide second messengers (synthesized by CdnD, the cognate CD-NTase in the CBASS operon). Ligand binding activates it to endonucleolytically degrade dsDNA to approximately 6 bp length fragments, with a preference for 5'-C or 5'-G cleavage site. The minor product of CdnD is the activating nucleotide; also binds the major product (2',3',3'-cyclic AMP-AMP-AMP) but is not activated by it. Only binds DNA in the presence of ligand. Is not activated by c-di-AMP, c-di-GMP, 3'3'-cyclic GMP-AMP (3'3'-cGAMP) or 3',3',3'-cyclic AMP-AMP-GMP. The polypeptide is CD-NTase-associated protein 4 (Acinetobacter sp. (strain ATCC 27244 / 9458)).